Reading from the N-terminus, the 54-residue chain is Relaxin (54 aa).

Position 1 is a pyrrolidone carboxylic acid (Gln1). Disulfide bonds link Cys10–Cys41, Cys22–Cys54, and Cys40–Cys45.

Belongs to the insulin family. In terms of assembly, heterodimer of a B chain and an A chain linked by two disulfide bonds.

Its subcellular location is the secreted. In terms of biological role, relaxin is an ovarian hormone that acts with estrogen to produce dilatation of the birth canal in many mammals. This is Relaxin from Balaenoptera acutorostrata (Common minke whale).